The sequence spans 622 residues: Low affinity potassium transport system protein Kup (622 aa).

Helical transmembrane passes span 9–29 (LPAI…TSPL), 49–69 (VFGF…IKYL), 103–123 (VIMG…TPAI), 137–157 (PQLD…LFMI), 165–185 (VGKL…GLGL), 213–233 (VSFI…ALYA), 247–267 (WFTV…ALLL), 276–296 (PFFL…AALA), 337–357 (IYIP…IVSF), 363–383 (LAAA…ILST), 396–416 (FVAL…TANL), and 419–439 (LLSG…VMTT).

Belongs to the HAK/KUP transporter (TC 2.A.72) family.

The protein resides in the cell inner membrane. It catalyses the reaction K(+)(in) + H(+)(in) = K(+)(out) + H(+)(out). In terms of biological role, responsible for the low-affinity transport of potassium into the cell. Likely operates as a K(+):H(+) symporter. This Shigella flexneri serotype 5b (strain 8401) protein is Low affinity potassium transport system protein Kup.